The primary structure comprises 114 residues: Holo-[acyl-carrier-protein] synthase (114 aa).

The Mg(2+) site is built by D8 and E58.

Belongs to the P-Pant transferase superfamily. AcpS family. It depends on Mg(2+) as a cofactor.

The protein resides in the cytoplasm. The enzyme catalyses apo-[ACP] + CoA = holo-[ACP] + adenosine 3',5'-bisphosphate + H(+). Transfers the 4'-phosphopantetheine moiety from coenzyme A to a Ser of acyl-carrier-protein. The polypeptide is Holo-[acyl-carrier-protein] synthase (Mycoplasma genitalium (strain ATCC 33530 / DSM 19775 / NCTC 10195 / G37) (Mycoplasmoides genitalium)).